Here is a 405-residue protein sequence, read N- to C-terminus: Formate-dependent phosphoribosylglycinamide formyltransferase (405 aa).

Residues 27-28 (EL) and Glu-87 each bind N(1)-(5-phospho-beta-D-ribosyl)glycinamide. ATP is bound by residues Arg-120, Lys-162, 167 to 172 (SSGKGQ), 202 to 205 (EGFI), and Glu-210. The ATP-grasp domain maps to 125-320 (RLAAETLGLP…EFELHARALL (196 aa)). Residues Glu-279 and Glu-291 each coordinate Mg(2+). Residues Asp-298, Lys-367, and 374-375 (RR) contribute to the N(1)-(5-phospho-beta-D-ribosyl)glycinamide site.

Belongs to the PurK/PurT family. As to quaternary structure, homodimer.

The catalysed reaction is N(1)-(5-phospho-beta-D-ribosyl)glycinamide + formate + ATP = N(2)-formyl-N(1)-(5-phospho-beta-D-ribosyl)glycinamide + ADP + phosphate + H(+). It participates in purine metabolism; IMP biosynthesis via de novo pathway; N(2)-formyl-N(1)-(5-phospho-D-ribosyl)glycinamide from N(1)-(5-phospho-D-ribosyl)glycinamide (formate route): step 1/1. Its function is as follows. Involved in the de novo purine biosynthesis. Catalyzes the transfer of formate to 5-phospho-ribosyl-glycinamide (GAR), producing 5-phospho-ribosyl-N-formylglycinamide (FGAR). Formate is provided by PurU via hydrolysis of 10-formyl-tetrahydrofolate. In Bordetella avium (strain 197N), this protein is Formate-dependent phosphoribosylglycinamide formyltransferase.